An 801-amino-acid chain; its full sequence is DNA mismatch repair protein MutS (801 aa).

An ATP-binding site is contributed by 590 to 597; that stretch reads GPNMSGKS.

The protein belongs to the DNA mismatch repair MutS family.

Its function is as follows. This protein is involved in the repair of mismatches in DNA. It is possible that it carries out the mismatch recognition step. This protein has a weak ATPase activity. This chain is DNA mismatch repair protein MutS, found in Thermotoga neapolitana (strain ATCC 49049 / DSM 4359 / NBRC 107923 / NS-E).